Reading from the N-terminus, the 742-residue chain is Polyribonucleotide nucleotidyltransferase (742 aa).

Mg(2+) is bound by residues aspartate 515 and aspartate 521. A KH domain is found at 581 to 640 (PRIITITIPVDKIGEVIGPKGKIINQIQDDTGASISIEDDGTIYIGATNGEAAEAAKNAV). An S1 motif domain is found at 652–724 (GERYLGTVVK…DRGKLSLVPV (73 aa)).

It belongs to the polyribonucleotide nucleotidyltransferase family. Mg(2+) is required as a cofactor.

The protein localises to the cytoplasm. The catalysed reaction is RNA(n+1) + phosphate = RNA(n) + a ribonucleoside 5'-diphosphate. Involved in mRNA degradation. Catalyzes the phosphorolysis of single-stranded polyribonucleotides processively in the 3'- to 5'-direction. This is Polyribonucleotide nucleotidyltransferase from Nocardioides sp. (strain ATCC BAA-499 / JS614).